We begin with the raw amino-acid sequence, 516 residues long: Exoglucanase 1 (516 aa).

The first 17 residues, 1 to 17 (MRASLLAFSLAAAVAGG), serve as a signal peptide directing secretion. Positions 18-445 (QQAGTLTAKR…GHLGISPFSG (428 aa)) are catalytic. Asn-45 is a glycosylation site (N-linked (GlcNAc...) asparagine). Glu-223 functions as the Nucleophile in the catalytic mechanism. Residue Glu-228 is the Proton donor of the active site. Asn-281 is a glycosylation site (N-linked (GlcNAc...) asparagine). The segment at 444 to 481 (SGGSSGTPPSNPSSSASPTSSTAKPSSTSTASNPSGTG) is disordered. The segment at 446-480 (GSSGTPPSNPSSSASPTSSTAKPSSTSTASNPSGT) is linker. The span at 449–481 (GTPPSNPSSSASPTSSTAKPSSTSTASNPSGTG) shows a compositional bias: low complexity. Positions 480–516 (TGAAHWAQCGGIGFSGPTTCPEPYTCAKDHDIYSQCV) constitute a CBM1 domain. 2 disulfides stabilise this stretch: Cys-488-Cys-505 and Cys-499-Cys-515.

Belongs to the glycosyl hydrolase 7 (cellulase C) family.

The protein resides in the secreted. It catalyses the reaction Hydrolysis of (1-&gt;4)-beta-D-glucosidic linkages in cellulose and cellotetraose, releasing cellobiose from the non-reducing ends of the chains.. The polypeptide is Exoglucanase 1 (cbh-1) (Neurospora crassa (strain ATCC 24698 / 74-OR23-1A / CBS 708.71 / DSM 1257 / FGSC 987)).